Here is a 476-residue protein sequence, read N- to C-terminus: Sulfate adenylyltransferase subunit 1 (476 aa).

In terms of domain architecture, tr-type G spans 24–241 (KSLLRFLTCG…EDVDFVQEQE (218 aa)). The interval 33–40 (GSVDDGKS) is G1. A GTP-binding site is contributed by 33-40 (GSVDDGKS). The tract at residues 91–95 (GITID) is G2. A G3 region spans residues 112–115 (DTPG). Residues 112–116 (DTPGH) and 167–170 (NKMD) contribute to the GTP site. Residues 167–170 (NKMD) are G4. Residues 205–207 (SAL) are G5.

It belongs to the TRAFAC class translation factor GTPase superfamily. Classic translation factor GTPase family. CysN/NodQ subfamily. Heterodimer composed of CysD, the smaller subunit, and CysN.

It catalyses the reaction sulfate + ATP + H(+) = adenosine 5'-phosphosulfate + diphosphate. The protein operates within sulfur metabolism; hydrogen sulfide biosynthesis; sulfite from sulfate: step 1/3. Its function is as follows. With CysD forms the ATP sulfurylase (ATPS) that catalyzes the adenylation of sulfate producing adenosine 5'-phosphosulfate (APS) and diphosphate, the first enzymatic step in sulfur assimilation pathway. APS synthesis involves the formation of a high-energy phosphoric-sulfuric acid anhydride bond driven by GTP hydrolysis by CysN coupled to ATP hydrolysis by CysD. The protein is Sulfate adenylyltransferase subunit 1 of Photobacterium profundum (strain SS9).